A 278-amino-acid polypeptide reads, in one-letter code: Biotin synthase (278 aa).

The 227-residue stretch at 1–227 folds into the Radical SAM core domain; sequence MQIMLCAISN…QSVVMVAGGR (227 aa). 3 residues coordinate [4Fe-4S] cluster: cysteine 16, cysteine 20, and cysteine 23. [2Fe-2S] cluster contacts are provided by cysteine 60, cysteine 95, and cysteine 153.

It belongs to the radical SAM superfamily. Biotin synthase family. Homodimer. It depends on [4Fe-4S] cluster as a cofactor. [2Fe-2S] cluster is required as a cofactor.

It carries out the reaction (4R,5S)-dethiobiotin + (sulfur carrier)-SH + 2 reduced [2Fe-2S]-[ferredoxin] + 2 S-adenosyl-L-methionine = (sulfur carrier)-H + biotin + 2 5'-deoxyadenosine + 2 L-methionine + 2 oxidized [2Fe-2S]-[ferredoxin]. It functions in the pathway cofactor biosynthesis; biotin biosynthesis; biotin from 7,8-diaminononanoate: step 2/2. In terms of biological role, catalyzes the conversion of dethiobiotin (DTB) to biotin by the insertion of a sulfur atom into dethiobiotin via a radical-based mechanism. This is Biotin synthase from Campylobacter jejuni subsp. doylei (strain ATCC BAA-1458 / RM4099 / 269.97).